Consider the following 466-residue polypeptide: Trigger factor (466 aa).

The PPIase FKBP-type domain maps to 162–243 (GDVVSIDLSA…VRSVKERELP (82 aa)). The segment at 428–466 (GNTIDTSEFFGKRVSAGEAEEAEPADEGAARAASDEATT) is disordered. Residues 457–466 (ARAASDEATT) show a composition bias toward low complexity.

This sequence belongs to the FKBP-type PPIase family. Tig subfamily.

It is found in the cytoplasm. The enzyme catalyses [protein]-peptidylproline (omega=180) = [protein]-peptidylproline (omega=0). In terms of biological role, involved in protein export. Acts as a chaperone by maintaining the newly synthesized protein in an open conformation. Functions as a peptidyl-prolyl cis-trans isomerase. The chain is Trigger factor from Mycobacterium tuberculosis (strain ATCC 25177 / H37Ra).